A 130-amino-acid chain; its full sequence is Small ribosomal subunit protein uS9 (130 aa).

The disordered stretch occupies residues 99–130 (KRAGLLTRDPRMKERKKPGLKAARRSPQFSKR). Basic residues predominate over residues 111–130 (KERKKPGLKAARRSPQFSKR).

The protein belongs to the universal ribosomal protein uS9 family.

This chain is Small ribosomal subunit protein uS9, found in Staphylococcus aureus (strain Mu3 / ATCC 700698).